The following is a 96-amino-acid chain: Co-chaperonin GroES (96 aa).

The protein belongs to the GroES chaperonin family. Heptamer of 7 subunits arranged in a ring. Interacts with the chaperonin GroEL.

Its subcellular location is the cytoplasm. In terms of biological role, together with the chaperonin GroEL, plays an essential role in assisting protein folding. The GroEL-GroES system forms a nano-cage that allows encapsulation of the non-native substrate proteins and provides a physical environment optimized to promote and accelerate protein folding. GroES binds to the apical surface of the GroEL ring, thereby capping the opening of the GroEL channel. In Polaromonas naphthalenivorans (strain CJ2), this protein is Co-chaperonin GroES.